The following is a 150-amino-acid chain: Large ribosomal subunit protein bL9 (150 aa).

Belongs to the bacterial ribosomal protein bL9 family.

Functionally, binds to the 23S rRNA. The polypeptide is Large ribosomal subunit protein bL9 (Corynebacterium efficiens (strain DSM 44549 / YS-314 / AJ 12310 / JCM 11189 / NBRC 100395)).